A 597-amino-acid chain; its full sequence is Period protein homolog lin-42 (597 aa).

Residues 1–44 are disordered; it reads MEPAGHSSATHNIVVPNANPTQPQPLAPAMREEGATLSPPNTWS. The 69-residue stretch at 155–223 folds into the PAS domain; it reads LQASHVSSNF…VRQAHIDLHN (69 aa). Disordered regions lie at residues 313–335, 418–450, 473–509, and 555–597; these read PVPS…QNQG, KSQS…EALT, DDVP…PPPG, and DGLL…DSQN. Residues 425-438 are compositionally biased toward basic and acidic residues; it reads SPAKQDEPFDEKKY. Polar residues predominate over residues 487–497; sequence IHWTSSSQNHY. The span at 561 to 577 shows a compositional bias: low complexity; sequence GATSTGGASPTSGTNSP.

Its subcellular location is the nucleus. It localises to the cytoplasm. In terms of biological role, transcriptional repressor which interacts with the promoter region of target genes. Has a specific role in developmental timing where it regulates temporal expression of a number of miRNAs and mRNAs. Controls temporal cell fate transition during embryonic and early larval development by restricting the expression of specific miRNAs, including let-7, miR-48, lin-4, miR-35 and miR-58. Restricts the accumulation of lin-29 in the hypodermis to the larval L4 stage, thus controlling terminal differentiation of seam cells. Has a role in the miRNA-mediated specification of asymmetric gene expression patterns in gustatory neurons. May also regulate genes involved in other biological processes including transport, small molecule metabolism, and growth. Inhibits dauer formation, by antagonizing daf-12. Its function is as follows. Specifically required for maintaining the timing of larval development and molting cycle rhythms. The chain is Period protein homolog lin-42 from Caenorhabditis elegans.